Reading from the N-terminus, the 698-residue chain is Endogenous retrovirus group K member 21 Env polyprotein (698 aa).

The tract at residues 1–25 (MHPSEMQRKAPPRRRRHRNRAPLTH) is disordered. The N-terminal stretch at 1 to 88 (MHPSEMQRKA…ALMIVSMVVS (88 aa)) is a signal peptide. Positions 10-20 (APPRRRRHRNR) are enriched in basic residues. Residues 89–631 (LPMPAGAAAA…NLNPVTWVKT (543 aa)) lie on the Extracellular side of the membrane. Residues Asn-99, Asn-127, Asn-152, Asn-273, Asn-354, Asn-371, and Asn-460 are each glycosylated (N-linked (GlcNAc...) asparagine). Residues 465-485 (FIFTLIAVIMGLIAVTAMAAV) are fusion peptide. 4 N-linked (GlcNAc...) asparagine glycosylation sites follow: Asn-506, Asn-553, Asn-565, and Asn-584. The helical transmembrane segment at 632-652 (IGSTTIINLILILVCLFCLLL) threads the bilayer. At 653–698 (VCRCTQQLRRDSDHRERAMMTMVVLSKRKGGNVGKSKRDQIVTVSV) the chain is on the cytoplasmic side.

It belongs to the beta type-B retroviral envelope protein family. HERV class-II K(HML-2) env subfamily. In terms of assembly, the surface (SU) and transmembrane (TM) proteins form a heterodimer. SU and TM are attached by noncovalent interactions or by a labile interchain disulfide bond. In terms of processing, specific enzymatic cleavages in vivo yield the mature SU and TM proteins.

The protein resides in the cell membrane. The protein localises to the virion. In terms of biological role, retroviral envelope proteins mediate receptor recognition and membrane fusion during early infection. Endogenous envelope proteins may have kept, lost or modified their original function during evolution. This endogenous envelope protein has lost its original fusogenic properties. Functionally, SU mediates receptor recognition. Its function is as follows. TM anchors the envelope heterodimer to the viral membrane through one transmembrane domain. The other hydrophobic domain, called fusion peptide, mediates fusion of the viral membrane with the target cell membrane. This Homo sapiens (Human) protein is Endogenous retrovirus group K member 21 Env polyprotein (ERVK-21).